Reading from the N-terminus, the 422-residue chain is Bifunctional enzyme IspD/IspF (422 aa).

Positions 1-267 (MAVGLLLLAA…PISALSMPLP (267 aa)) are 2-C-methyl-D-erythritol 4-phosphate cytidylyltransferase. The interval 268 to 422 (LIGVGIDFHK…AIAVAQIYHR (155 aa)) is 2-C-methyl-D-erythritol 2,4-cyclodiphosphate synthase. Asp274 and His276 together coordinate a divalent metal cation. Residues 274–276 (DFH) and 301–302 (HS) each bind 4-CDP-2-C-methyl-D-erythritol 2-phosphate. His309 contacts a divalent metal cation. Residues 323–325 (DIG), Phe404, and Arg407 contribute to the 4-CDP-2-C-methyl-D-erythritol 2-phosphate site.

It in the N-terminal section; belongs to the IspD/TarI cytidylyltransferase family. IspD subfamily. In the C-terminal section; belongs to the IspF family. Requires a divalent metal cation as cofactor.

The catalysed reaction is 2-C-methyl-D-erythritol 4-phosphate + CTP + H(+) = 4-CDP-2-C-methyl-D-erythritol + diphosphate. It catalyses the reaction 4-CDP-2-C-methyl-D-erythritol 2-phosphate = 2-C-methyl-D-erythritol 2,4-cyclic diphosphate + CMP. It participates in isoprenoid biosynthesis; isopentenyl diphosphate biosynthesis via DXP pathway; isopentenyl diphosphate from 1-deoxy-D-xylulose 5-phosphate: step 2/6. Its pathway is isoprenoid biosynthesis; isopentenyl diphosphate biosynthesis via DXP pathway; isopentenyl diphosphate from 1-deoxy-D-xylulose 5-phosphate: step 4/6. Functionally, bifunctional enzyme that catalyzes the formation of 4-diphosphocytidyl-2-C-methyl-D-erythritol from CTP and 2-C-methyl-D-erythritol 4-phosphate (MEP) (IspD), and catalyzes the conversion of 4-diphosphocytidyl-2-C-methyl-D-erythritol 2-phosphate (CDP-ME2P) to 2-C-methyl-D-erythritol 2,4-cyclodiphosphate (ME-CPP) with a corresponding release of cytidine 5-monophosphate (CMP) (IspF). The sequence is that of Bifunctional enzyme IspD/IspF from Tropheryma whipplei (strain TW08/27) (Whipple's bacillus).